A 74-amino-acid chain; its full sequence is Translation initiation factor IF-1 (74 aa).

Residues 1-73 enclose the S1-like domain; the sequence is MSNKEDIIKM…TKGRIVYRKK (73 aa).

Belongs to the IF-1 family. As to quaternary structure, component of the 30S ribosomal translation pre-initiation complex which assembles on the 30S ribosome in the order IF-2 and IF-3, IF-1 and N-formylmethionyl-tRNA(fMet); mRNA recruitment can occur at any time during PIC assembly.

Its subcellular location is the cytoplasm. Functionally, one of the essential components for the initiation of protein synthesis. Stabilizes the binding of IF-2 and IF-3 on the 30S subunit to which N-formylmethionyl-tRNA(fMet) subsequently binds. Helps modulate mRNA selection, yielding the 30S pre-initiation complex (PIC). Upon addition of the 50S ribosomal subunit IF-1, IF-2 and IF-3 are released leaving the mature 70S translation initiation complex. The chain is Translation initiation factor IF-1 from Thermosipho melanesiensis (strain DSM 12029 / CIP 104789 / BI429).